We begin with the raw amino-acid sequence, 600 residues long: Cytidine monophosphate-N-acetylneuraminic acid hydroxylase (600 aa).

The 99-residue stretch at 9-107 (LSPVEVASLK…VEMDENNRLL (99 aa)) folds into the Rieske domain. Positions 49, 51, 70, and 73 each coordinate [2Fe-2S] cluster.

The protein belongs to the CMP-Neu5Ac hydroxylase family. The cofactor is [2Fe-2S] cluster.

The protein localises to the cytoplasm. The enzyme catalyses CMP-N-acetyl-beta-neuraminate + 2 Fe(II)-[cytochrome b5] + O2 + 2 H(+) = CMP-N-glycoloyl-beta-neuraminate + 2 Fe(III)-[cytochrome b5] + H2O. It participates in amino-sugar metabolism; N-acetylneuraminate metabolism. In terms of biological role, sialic acids are components of carbohydrate chains of glycoconjugates and are involved in cell-cell recognition and cell-pathogen interactions. Catalyzes the conversion of CMP-N-acetylneuraminic acid (CMP-Neu5Ac) into its hydroxylated derivative CMP-N-glycolylneuraminic acid (CMP-Neu5Gc), a sialic acid abundantly expressed at the surface of many cells. The sequence is that of Cytidine monophosphate-N-acetylneuraminic acid hydroxylase (CMAH) from Pan paniscus (Pygmy chimpanzee).